Consider the following 266-residue polypeptide: MVCLKLPGGSCMTALTVTLMVLSSPLALSGDTRPRFLWQPKRECHFFNGTERVRFLDRYFYNQEESVRFDSDVGEFRAVTELGRPDAEYWNSQKDILEQARAAVDTYCRHNYGVVESFTVQRRVQPKVTVYPSKTQPLQHHNLLVCSVSGFYPGSIEVRWFLNGQEEKAGMVSTGLIQNGDWTFQTLVMLETVPRSGEVYTCQVEHPSVTSPLTVEWRARSESAQSKMLSGVGGFVLGLLFLGAGLFIYFRNQKGHSGLQPTGFLS.

The N-terminal stretch at 1–29 is a signal peptide; it reads MVCLKLPGGSCMTALTVTLMVLSSPLALS. Residues 30-124 form a beta-1 region; the sequence is GDTRPRFLWQ…VESFTVQRRV (95 aa). The Extracellular segment spans residues 30–227; sequence GDTRPRFLWQ…RARSESAQSK (198 aa). Cysteine 44 and cysteine 108 are oxidised to a cystine. N-linked (GlcNAc...) asparagine glycosylation occurs at asparagine 48. 5 residues coordinate a peptide antigen: aspartate 86, tryptophan 90, histidine 110, asparagine 111, and arginine 122. The interval 125 to 227 is beta-2; the sequence is QPKVTVYPSK…RARSESAQSK (103 aa). Residues 126 to 214 form the Ig-like C1-type domain; sequence PKVTVYPSKT…EHPSVTSPLT (89 aa). Cysteine 146 and cysteine 202 form a disulfide bridge. A helical membrane pass occupies residues 228-248; sequence MLSGVGGFVLGLLFLGAGLFI. The Cytoplasmic portion of the chain corresponds to 249–266; the sequence is YFRNQKGHSGLQPTGFLS. Residue lysine 254 forms a Glycyl lysine isopeptide (Lys-Gly) (interchain with G-Cter in ubiquitin) linkage.

In terms of assembly, heterotrimer that consists of an alpha chain HLA-DRA, a beta chain HLA-DRB1 and a peptide (peptide-MHCII). Newly synthesized alpha and beta chains forms a heterodimer (MHCII) that associates with the CD74/invariant chain (Ii) in the endoplasmic reticulum (ER). Ii is a trimer composed of three subunits and each subunit interacts with one MHCII dimer, blocking the peptide-binding cleft. As a result, MHCII molecules cannot bind peptides present in the ER. The complex of MHCII and CD74/Ii is transported in vesicles from ER to Golgi to lysosomes, where it encounters antigenic peptides generated via proteolysis of endocytosed antigens. MHCII dimers are dissociated from CD74/Ii by the combined action of proteolysis and HLA-DM. Lysosomal enzymes such as cathepsin, degrade CD74/Ii leaving a 24 amino acid remnant called class II-associated Ii or CLIP. Interacts (via the peptide binding cleft) with CLIP; this interaction inhibits antigen peptide binding before entry in the endosomal compartment. The displacement of CLIP and replacement by a high affinity peptide in lysosomes is performed by HLA-DM heterodimer. HLA-DM catalyzes CLIP dissociation from MHCII, stabilizes empty MHCII and mediates the selection of high affinity peptides. Interacts with HLA-DM heterodimer; this interaction is direct. Interacts with TCR (via CDR3). Interacts (via beta-2 domain) with CD4 coreceptor (via Ig-like V-type domain); this interaction is of exceptionally low affinity yet necessary for optimal recognition of antigenic peptides. (Microbial infection) Interacts with Staphylococcus aureus enterotoxin A/entA, enterotoxin B/entB, enterotoxin C1/entC1, enterotoxin D/entD and enterotoxin H/entH. Enterotoxins bind outside the peptide-binding cleft of MHCII: enterotoxin H/entH interacts via the beta-1 domain of MHCII and in a zinc-dependent way, whereas enterotoxin B/entB interacts primarily via the alpha-1 domain. As to quaternary structure, (Microbial infection) Interacts with Epstein-Barr virus gp42 protein. In terms of processing, ubiquitinated by MARCHF1 and MARCHF8 at Lys-254 leading to sorting into the endosome system and down-regulation of MHCII. In terms of tissue distribution, expressed in professional APCs: monocyte/macrophages, dendritic cells and B cells (at protein level). Expressed in thymic epithelial cells (at protein level).

The protein resides in the cell membrane. It is found in the endoplasmic reticulum membrane. It localises to the lysosome membrane. The protein localises to the late endosome membrane. Its subcellular location is the autolysosome membrane. Its function is as follows. A beta chain of antigen-presenting major histocompatibility complex class II (MHCII) molecule. In complex with the alpha chain HLA-DRA, displays antigenic peptides on professional antigen presenting cells (APCs) for recognition by alpha-beta T cell receptor (TCR) on HLA-DRB1-restricted CD4-positive T cells. This guides antigen-specific T-helper effector functions, both antibody-mediated immune response and macrophage activation, to ultimately eliminate the infectious agents and transformed cells. Typically presents extracellular peptide antigens of 10 to 30 amino acids that arise from proteolysis of endocytosed antigens in lysosomes. In the tumor microenvironment, presents antigenic peptides that are primarily generated in tumor-resident APCs likely via phagocytosis of apoptotic tumor cells or macropinocytosis of secreted tumor proteins. Presents peptides derived from intracellular proteins that are trapped in autolysosomes after macroautophagy, a mechanism especially relevant for T cell selection in the thymus and central immune tolerance. The selection of the immunodominant epitopes follows two processing modes: 'bind first, cut/trim later' for pathogen-derived antigenic peptides and 'cut first, bind later' for autoantigens/self-peptides. The anchor residue at position 1 of the peptide N-terminus, usually a large hydrophobic residue, is essential for high affinity interaction with MHCII molecules. Allele DRB1*01:01: Displays an immunodominant epitope derived from Bacillus anthracis pagA/protective antigen, PA (KLPLYISNPNYKVNVYAVT), to both naive and PA-specific memory CD4-positive T cells. Presents immunodominant HIV-1 gag peptide (FRDYVDRFYKTLRAEQASQE) on infected dendritic cells for recognition by TRAV24-TRBV2 TCR on CD4-positive T cells and controls viral load. May present to T-helper 1 cells several HRV-16 epitopes derived from capsid proteins VP1 (PRFSLPFLSIASAYYMFYDG) and VP2 (PHQFINLRSNNSATLIVPYV), contributing to viral clearance. Displays commonly recognized peptides derived from IAV external protein HA (PKYVKQNTLKLAT and SNGNFIAPEYAYKIVK) and from internal proteins M, NP and PB1, with M-derived epitope (GLIYNRMGAVTTEV) being the most immunogenic. Presents a self-peptide derived from COL4A3 (GWISLWKGFSF) to TCR (TRAV14 biased) on CD4-positive, FOXP3-positive regulatory T cells and mediates immune tolerance to self. May present peptides derived from oncofetal trophoblast glycoprotein TPBG 5T4, known to be recognized by both T-helper 1 and regulatory T cells. Displays with low affinity a self-peptide derived from MBP (VHFFKNIVTPRTP). Functionally, allele DRB1*03:01: May present to T-helper 1 cells an HRV-16 epitope derived from capsid protein VP2 (NEKQPSDDNWLNFDGTLLGN), contributing to viral clearance. Displays self-peptides derived from retinal SAG (NRERRGIALDGKIKHE) and thyroid TG (LSSVVVDPSIRHFDV). Presents viral epitopes derived from HHV-6B gH/U48 and U85 antigens to polyfunctional CD4-positive T cells with cytotoxic activity implicated in control of HHV-6B infection. Presents several immunogenic epitopes derived from C.tetani neurotoxin tetX, playing a role in immune recognition and long-term protection. In terms of biological role, allele DRB1*04:01: Presents an immunodominant bacterial epitope derived from M.tuberculosis esxB/culture filtrate antigen CFP-10 (EISTNIRQAGVQYSR), eliciting CD4-positive T cell effector functions such as IFNG production and cytotoxic activity. May present to T-helper 1 cells an HRV-16 epitope derived from capsid protein VP2 (NEKQPSDDNWLNFDGTLLGN), contributing to viral clearance. Presents tumor epitopes derived from melanoma-associated TYR antigen (QNILLSNAPLGPQFP and DYSYLQDSDPDSFQD), triggering CD4-positive T cell effector functions such as GMCSF production. Displays preferentially citrullinated self-peptides derived from VIM (GVYATR/citSSAVR and SAVRAR/citSSVPGVR) and ACAN (VVLLVATEGR/ CitVRVNSAYQDK). Displays self-peptides derived from COL2A1. Its function is as follows. Allele DRB1*04:02: Displays native or citrullinated self-peptides derived from VIM. Allele DRB1*04:04: May present to T-helper 1 cells several HRV-16 epitopes derived from capsid proteins VP1 (HIVMQYMYVPPGAPIPTTRN) and VP2 (RGDSTITSQDVANAVVGYGV), contributing to viral clearance. Displays preferentially citrullinated self-peptides derived from VIM (SAVRAR/citSSVPGVR). Functionally, allele DRB1*04:05: May present to T-helper 1 cells an immunogenic epitope derived from tumor-associated antigen WT1 (KRYFKLSHLQMHSRKH), likely providing for effective antitumor immunity in a wide range of solid and hematological malignancies. In terms of biological role, allele DRB1*05:01: Presents an immunodominant HIV-1 gag peptide (FRDYVDRFYKTLRAEQASQE) on infected dendritic cells for recognition by TRAV24-TRBV2 TCR on CD4-positive T cells and controls viral load. Its function is as follows. Allele DRB1*07:01: Upon EBV infection, presents latent antigen EBNA2 peptide (PRSPTVFYNIPPMPLPPSQL) to CD4-positive T cells, driving oligoclonal expansion and selection of a dominant virus-specific memory T cell subset with cytotoxic potential to directly eliminate virus-infected B cells. May present to T-helper 1 cells several HRV-16 epitopes derived from capsid proteins VP1 (PRFSLPFLSIASAYYMFYDG) and VP2 (VPYVNAVPMDSMVRHNNWSL), contributing to viral clearance. In the context of tumor immunesurveillance, may present to T-helper 1 cells an immunogenic epitope derived from tumor-associated antigen WT1 (MTEYKLVVVGAVGVGKSALTIQLI), likely providing for effective antitumor immunity in a wide range of solid and hematological malignancies. In metastatic epithelial tumors, presents to intratumoral CD4-positive T cells a KRAS neoantigen (MTEYKLVVVGAVGVGKSALTIQLI) carrying G12V hotspot driver mutation and may mediate tumor regression. Allele DRB1*11:01: Displays an immunodominant HIV-1 gag peptide (FRDYVDRFYKTLRAEQASQE) on infected dendritic cells for recognition by TRAV24-TRBV2 TCR on CD4-positive T cells and controls viral load. May present to T-helper 1 cells an HRV-16 epitope derived from capsid protein VP2 (SDRIIQITRGDSTITSQDVA), contributing to viral clearance. Presents several immunogenic epitopes derived from C.tetani neurotoxin tetX, playing a role in immune recognition and longterm protection. In the context of tumor immunesurveillance, may present tumor-derived neoantigens to CD4-positive T cells and trigger anti-tumor helper functions. Functionally, allele DRB1*13:01: Presents viral epitopes derived from HHV-6B antigens to polyfunctional CD4-positive T cells implicated in control of HHV-6B infection. In terms of biological role, allele DRB1*15:01: May present to T-helper 1 cells an HRV-16 epitope derived from capsid protein VP2 (SNNSATLIVPYVNAVPMDSM), contributing to viral clearance. Displays a self-peptide derived from MBP (ENPVVHFFKNIVTPR). May present to T-helper 1 cells an immunogenic epitope derived from tumor-associated antigen WT1 (KRYFKLSHLQMHSRKH), likely providing for effective antitumor immunity in a wide range of solid and hematological malignancies. Its function is as follows. Allele DRB1*15:02: Displays an immunodominant HIV-1 gag peptide (FRDYVDRFYKTLRAEQASQE) on infected dendritic cells for recognition by TRAV24-TRBV2 TCR on CD4-positive T cells and controls viral load. May present to T-helper 1 cells an immunogenic epitope derived from tumor-associated antigen WT1 (KRYFKLSHLQMHSRKH), likely providing for effective antitumor immunity in a wide range of solid and hematological malignancies. (Microbial infection) Acts as a receptor for Epstein-Barr virus on lymphocytes. The sequence is that of HLA class II histocompatibility antigen, DRB1 beta chain from Homo sapiens (Human).